We begin with the raw amino-acid sequence, 515 residues long: Maturase K (515 aa).

This sequence belongs to the intron maturase 2 family. MatK subfamily.

It localises to the plastid. Its subcellular location is the chloroplast. In terms of biological role, usually encoded in the trnK tRNA gene intron. Probably assists in splicing its own and other chloroplast group II introns. This is Maturase K from Pinus clausa (Sand pine).